The sequence spans 298 residues: Mitochondrial basic amino acids transporter (298 aa).

The next 6 helical transmembrane spans lie at 2-22, 61-81, 96-116, 153-172, 187-207, and 255-275; these read ALDFLAGCAGGVAGVLVGHPF, GLGSPLLGLTFINALVFGVQG, FLAGAAAGAIQCVICCPMELA, GMVSTLLRETPSFGVYFLTY, LLVPKLLLAGGTSGIASWLST, and LLRAFPVNAATFATVTVVLSY. Solcar repeat units lie at residues 2–86, 90–178, and 185–275; these read ALDF…TLRA, DSPL…LTRA, and DRLL…VLSY.

It belongs to the mitochondrial carrier (TC 2.A.29) family.

Its subcellular location is the mitochondrion inner membrane. The catalysed reaction is L-lysine(out) + L-arginine(in) = L-lysine(in) + L-arginine(out). The enzyme catalyses L-histidine(out) + L-arginine(in) = L-histidine(in) + L-arginine(out). It catalyses the reaction L-ornithine(in) + L-arginine(out) = L-ornithine(out) + L-arginine(in). It carries out the reaction L-homoarginine(in) + L-arginine(out) = L-homoarginine(out) + L-arginine(in). The catalysed reaction is N(omega)-methyl-L-arginine(in) + L-arginine(out) = N(omega)-methyl-L-arginine(out) + L-arginine(in). The enzyme catalyses L-arginine(in) = L-arginine(out). It catalyses the reaction L-lysine(in) = L-lysine(out). It carries out the reaction L-ornithine(in) = L-ornithine(out). The catalysed reaction is L-histidine(out) = L-histidine(in). In terms of biological role, mitochondrial transporter of arginine, lysine, homoarginine, methylarginine and, to a much lesser extent, ornithine and histidine. Does not transport carnitine nor acylcarnitines. Functions by both counter-exchange and uniport mechanisms. Plays a physiological role in the import of basic amino acids into mitochondria for mitochondrial protein synthesis and amino acid degradation. The chain is Mitochondrial basic amino acids transporter (SLC25A29) from Bos taurus (Bovine).